A 911-amino-acid polypeptide reads, in one-letter code: Viral IRF4-like protein (911 aa).

The segment at residues S7 to R114 is a DNA-binding region (IRF tryptophan pentad repeat). Disordered stretches follow at residues T147–S184, A211–P302, G494–C537, and E681–P727. Residues A211 to T221 show a composition bias toward low complexity. 2 stretches are compositionally biased toward polar residues: residues R222–T231 and G495–Q505. Over residues R697–P710 the composition is skewed to basic residues.

This sequence belongs to the IRF family. In terms of assembly, interacts with host MDM2; this interaction facilitates the proteasomal degradation of TP53/p53. Interacts with host IRF7; this interaction prevents IRF7 dimerization and subsequent activation.

The protein resides in the host nucleus. Functionally, plays a role in host cell apoptosis modulation by promoting TP53/p53 ubiquitination and subsequent degradation and thus down-regulating TP53/p53-mediated apoptosis. Works as a potential viral transcription factor to modulate host gene expression to build favorable environments for the viral lytic life cycle and greatly accelerates the induction of an immediate early gene RTA, early genes ORF36 and ORF57, late genes ORF25 and ORF64, and latent genes LANA1 and v-IRF3. Inhibits host interferon-alpha production by interacting with host IRF7 and preventing IRF7 dimerization. The polypeptide is Viral IRF4-like protein (vIRF-4) (Homo sapiens (Human)).